The chain runs to 88 residues: Thioredoxin-2 (88 aa).

One can recognise a Thioredoxin domain in the interval 2-88 (SRVIHISSNE…YRNGAKVSEF (87 aa)). Catalysis depends on nucleophile residues C31 and C34. Cysteines 31 and 34 form a disulfide.

Belongs to the thioredoxin family.

Participates in various redox reactions through the reversible oxidation of its active center dithiol to a disulfide and catalyzes dithiol-disulfide exchange reactions. This chain is Thioredoxin-2 (trxB), found in Dictyostelium discoideum (Social amoeba).